The chain runs to 560 residues: Nuclear hormone receptor family member nhr-8 (560 aa).

Residues 1–21 are disordered; it reads MPSSSPSMDESRRSAVPPKEP. The nuclear receptor DNA-binding region spans 23-98; that stretch reads GRICTVCSDR…VGMNSEWLND (76 aa). 2 consecutive NR C4-type zinc fingers follow at residues 26 to 46 and 62 to 86; these read CTVCSDRANGYNFGVLTCESC and CPFSDSCQITSASRKFCQACRLNKC. Positions 336 to 560 constitute an NR LBD domain; that stretch reads DEITLLEELH…PLIRELCSFE (225 aa).

The protein belongs to the nuclear hormone receptor family.

Its subcellular location is the nucleus. In terms of biological role, orphan nuclear receptor. The polypeptide is Nuclear hormone receptor family member nhr-8 (nhr-8) (Caenorhabditis elegans).